Here is a 247-residue protein sequence, read N- to C-terminus: Ribosomal RNA processing protein 36 homolog (247 aa).

Disordered stretches follow at residues 1–29, 62–89, 136–188, and 218–247; these read MDNQ…HLKD, RTQG…QRVP, SVEK…RELV, and GKLQ…QVDQ. Residues 8-23 are compositionally biased toward acidic residues; the sequence is SSDDESPTDDCSDEGE. Composition is skewed to basic and acidic residues over residues 136–153 and 164–174; these read SVEK…RKNL and ERSRKSAEAKR. Positions 218-240 are enriched in basic residues; sequence GKLQKYLTKRRKKTASKDRRHVP.

It belongs to the RRP36 family.

Its subcellular location is the nucleus. It localises to the nucleolus. Involved in the early processing steps of the pre-rRNA in the maturation pathway leading to the 18S rRNA. This Nematostella vectensis (Starlet sea anemone) protein is Ribosomal RNA processing protein 36 homolog.